A 623-amino-acid chain; its full sequence is UvrABC system protein C (623 aa).

Positions 28–105 (GAPGVYRMLD…IKQLKPKYNV (78 aa)) constitute a GIY-YIG domain. Positions 215–250 (TRVQEELAEQMMAASEAMEFERAAALRDRIRALTTV) constitute a UVR domain.

It belongs to the UvrC family. As to quaternary structure, interacts with UvrB in an incision complex.

The protein resides in the cytoplasm. The UvrABC repair system catalyzes the recognition and processing of DNA lesions. UvrC both incises the 5' and 3' sides of the lesion. The N-terminal half is responsible for the 3' incision and the C-terminal half is responsible for the 5' incision. In Ruegeria pomeroyi (strain ATCC 700808 / DSM 15171 / DSS-3) (Silicibacter pomeroyi), this protein is UvrABC system protein C.